The primary structure comprises 508 residues: Chromosomal replication initiator protein DnaA (508 aa).

The segment at 1–91 (MADDPGSSFT…TDALSRRLGQ (91 aa)) is domain I, interacts with DnaA modulators. Positions 91–167 (QQIQLGVRIA…AIDPAVAAGT (77 aa)) are domain II. A disordered region spans residues 104–152 (DDVEDALIPSAEPFPDTDADLSARRRTDSRASGERGAVTNTQPGWTNYF). Residues 124–136 (LSARRRTDSRASG) are compositionally biased toward basic and acidic residues. Polar residues predominate over residues 141–152 (VTNTQPGWTNYF). The domain III, AAA+ region stretch occupies residues 168-384 (SLNRRYTFDT…GALIRVTAFA (217 aa)). ATP-binding residues include glycine 212, glycine 214, lysine 215, and threonine 216. Residues 385-508 (SLNKTPIDKS…TTRIRQRSKR (124 aa)) are domain IV, binds dsDNA.

Belongs to the DnaA family. Oligomerizes as a right-handed, spiral filament on DNA at oriC.

Its subcellular location is the cytoplasm. Its function is as follows. Plays an essential role in the initiation and regulation of chromosomal replication. ATP-DnaA binds to the origin of replication (oriC) to initiate formation of the DNA replication initiation complex once per cell cycle. Binds the DnaA box (a 9 base pair repeat at the origin) and separates the double-stranded (ds)DNA. Forms a right-handed helical filament on oriC DNA; dsDNA binds to the exterior of the filament while single-stranded (ss)DNA is stabiized in the filament's interior. The ATP-DnaA-oriC complex binds and stabilizes one strand of the AT-rich DNA unwinding element (DUE), permitting loading of DNA polymerase. After initiation quickly degrades to an ADP-DnaA complex that is not apt for DNA replication. Binds acidic phospholipids. The sequence is that of Chromosomal replication initiator protein DnaA from Mycobacterium avium.